We begin with the raw amino-acid sequence, 354 residues long: Probable L-ascorbate-6-phosphate lactonase UlaG (354 aa).

This sequence belongs to the UlaG family. A divalent metal cation is required as a cofactor.

It localises to the cytoplasm. The enzyme catalyses L-ascorbate 6-phosphate + H2O = 3-dehydro-L-gulonate 6-phosphate. It participates in cofactor degradation; L-ascorbate degradation; D-xylulose 5-phosphate from L-ascorbate: step 1/4. In terms of biological role, probably catalyzes the hydrolysis of L-ascorbate-6-P into 3-keto-L-gulonate-6-P. Is essential for L-ascorbate utilization under anaerobic conditions. In Escherichia coli (strain SMS-3-5 / SECEC), this protein is Probable L-ascorbate-6-phosphate lactonase UlaG.